A 121-amino-acid chain; its full sequence is Holin-like protein CidA (121 aa).

The next 3 helical transmembrane spans lie at 27–47, 58–78, and 89–109; these read VHLP…SLKF, GADF…VAVI, and IDLI…TGIL.

This sequence belongs to the CidA/LrgA family. CidA subfamily.

Its subcellular location is the cell membrane. Its function is as follows. Increases the activity of extracellular murein hydrolases possibly by mediating their export via hole formation. Inhibited by the antiholin-like proteins LrgAB. In an unstressed cell, the LrgAB products probably inhibit the function of the CidA protein. When a cell is stressed by the addition of antibiotics or by other factors in the environment, CidA possibly oligomerizes within the bacterial cell membrane, creating lesions that disrupt the proton motive force, which in turn results in loss of cell viability. These lesions are also hypothesized to regulate the subsequent cell lysis by either allowing the murein hydrolases access to the cell wall substrate and/or regulating their activity by a possible change in the cell wall pH that results from loss of membrane potential. The chain is Holin-like protein CidA from Bacillus cytotoxicus (strain DSM 22905 / CIP 110041 / 391-98 / NVH 391-98).